We begin with the raw amino-acid sequence, 94 residues long: Co-chaperonin GroES (94 aa).

It belongs to the GroES chaperonin family. As to quaternary structure, heptamer of 7 subunits arranged in a ring. Interacts with the chaperonin GroEL.

The protein resides in the cytoplasm. Its function is as follows. Together with the chaperonin GroEL, plays an essential role in assisting protein folding. The GroEL-GroES system forms a nano-cage that allows encapsulation of the non-native substrate proteins and provides a physical environment optimized to promote and accelerate protein folding. GroES binds to the apical surface of the GroEL ring, thereby capping the opening of the GroEL channel. The sequence is that of Co-chaperonin GroES from Lactobacillus helveticus (strain DPC 4571).